The sequence spans 318 residues: Methionyl-tRNA formyltransferase (318 aa).

A (6S)-5,6,7,8-tetrahydrofolate-binding site is contributed by 112-115 (SILP).

Belongs to the Fmt family.

The enzyme catalyses L-methionyl-tRNA(fMet) + (6R)-10-formyltetrahydrofolate = N-formyl-L-methionyl-tRNA(fMet) + (6S)-5,6,7,8-tetrahydrofolate + H(+). Attaches a formyl group to the free amino group of methionyl-tRNA(fMet). The formyl group appears to play a dual role in the initiator identity of N-formylmethionyl-tRNA by promoting its recognition by IF2 and preventing the misappropriation of this tRNA by the elongation apparatus. The chain is Methionyl-tRNA formyltransferase from Shewanella baltica (strain OS223).